Consider the following 188-residue polypeptide: Actin-related protein 2/3 complex subunit 3 (188 aa).

Belongs to the ARPC3 family. In terms of assembly, component of the Arp2/3 complex.

The protein localises to the cytoplasm. It is found in the cytoskeleton. Functions as a component of the Arp2/3 complex which is involved in regulation of actin polymerization and together with an activating nucleation-promoting factor (NPF) mediates the formation of branched actin networks. This chain is Actin-related protein 2/3 complex subunit 3, found in Entamoeba histolytica (strain ATCC 30459 / HM-1:IMSS / ABRM).